A 71-amino-acid chain; its full sequence is ATP synthase subunit c (71 aa).

The next 2 membrane-spanning stretches (helical) occupy residues 4–24 (AVIGAGIAVLTGLGAGIGIGI) and 48–68 (IIGAGLAEATAIYGLIIAFMI).

It belongs to the ATPase C chain family. As to quaternary structure, F-type ATPases have 2 components, F(1) - the catalytic core - and F(0) - the membrane proton channel. F(1) has five subunits: alpha(3), beta(3), gamma(1), delta(1), epsilon(1). F(0) has three main subunits: a(1), b(2) and c(10-14). The alpha and beta chains form an alternating ring which encloses part of the gamma chain. F(1) is attached to F(0) by a central stalk formed by the gamma and epsilon chains, while a peripheral stalk is formed by the delta and b chains.

The protein resides in the cell membrane. Its function is as follows. F(1)F(0) ATP synthase produces ATP from ADP in the presence of a proton or sodium gradient. F-type ATPases consist of two structural domains, F(1) containing the extramembraneous catalytic core and F(0) containing the membrane proton channel, linked together by a central stalk and a peripheral stalk. During catalysis, ATP synthesis in the catalytic domain of F(1) is coupled via a rotary mechanism of the central stalk subunits to proton translocation. In terms of biological role, key component of the F(0) channel; it plays a direct role in translocation across the membrane. A homomeric c-ring of between 10-14 subunits forms the central stalk rotor element with the F(1) delta and epsilon subunits. The sequence is that of ATP synthase subunit c from Clostridium botulinum (strain Alaska E43 / Type E3).